Here is a 118-residue protein sequence, read N- to C-terminus: UPF0295 protein BCG9842_B4782 (118 aa).

The next 2 helical transmembrane spans lie at 12–32 (IRTF…LGVF) and 43–63 (FMMV…WIGM).

The protein belongs to the UPF0295 family.

The protein resides in the cell membrane. This chain is UPF0295 protein BCG9842_B4782, found in Bacillus cereus (strain G9842).